A 164-amino-acid chain; its full sequence is Siroheme decarboxylase alpha subunit (164 aa).

Belongs to the Ahb/Nir family. In terms of assembly, forms a heterodimer composed of AhbA and AhbB.

It catalyses the reaction siroheme + 2 H(+) = 12,18-didecarboxysiroheme + 2 CO2. The protein operates within porphyrin-containing compound metabolism; protoheme biosynthesis. Involved in siroheme-dependent heme b biosynthesis. Catalyzes the decarboxylation of siroheme into didecarboxysiroheme. The polypeptide is Siroheme decarboxylase alpha subunit (Oleidesulfovibrio alaskensis (strain ATCC BAA-1058 / DSM 17464 / G20) (Desulfovibrio alaskensis)).